Here is a 347-residue protein sequence, read N- to C-terminus: Methylthioribose-1-phosphate isomerase (347 aa).

Residues 45–47 (RGA), R88, and Q197 contribute to the substrate site. The active-site Proton donor is D238. 248-249 (NK) is a binding site for substrate.

The protein belongs to the eIF-2B alpha/beta/delta subunits family. MtnA subfamily.

It carries out the reaction 5-(methylsulfanyl)-alpha-D-ribose 1-phosphate = 5-(methylsulfanyl)-D-ribulose 1-phosphate. The protein operates within amino-acid biosynthesis; L-methionine biosynthesis via salvage pathway; L-methionine from S-methyl-5-thio-alpha-D-ribose 1-phosphate: step 1/6. Functionally, catalyzes the interconversion of methylthioribose-1-phosphate (MTR-1-P) into methylthioribulose-1-phosphate (MTRu-1-P). This chain is Methylthioribose-1-phosphate isomerase, found in Nostoc sp. (strain PCC 7120 / SAG 25.82 / UTEX 2576).